Here is a 168-residue protein sequence, read N- to C-terminus: Small ribosomal subunit protein uS5 (168 aa).

The 64-residue stretch at 17-80 folds into the S5 DRBM domain; sequence IEDQLVAVNR…EDGKKKMINV (64 aa).

It belongs to the universal ribosomal protein uS5 family. Part of the 30S ribosomal subunit. Contacts proteins S4 and S8.

In terms of biological role, with S4 and S12 plays an important role in translational accuracy. Located at the back of the 30S subunit body where it stabilizes the conformation of the head with respect to the body. This Lactobacillus helveticus (strain DPC 4571) protein is Small ribosomal subunit protein uS5.